A 213-amino-acid polypeptide reads, in one-letter code: Na(+)-translocating NADH-quinone reductase subunit D (213 aa).

7 helical membrane passes run 21 to 41, 42 to 62, 77 to 97, 101 to 121, 131 to 151, 153 to 173, and 183 to 203; these read ILIAILGICSALAVTTTVQTA, ITMGIAVSIVTGCSSFFVSLL, IIISLFVIVIDQFLKAFFFDI, LSVFVGLIITNCIVMGRSESL, FLDGFASGLGYGWVLLVIGVI, ELFGFGTLMGFRIIPQFVYAS, and LSLMVLAPSAFFLLGIMIWLV.

This sequence belongs to the NqrDE/RnfAE family. As to quaternary structure, composed of six subunits; NqrA, NqrB, NqrC, NqrD, NqrE and NqrF.

The protein resides in the cell inner membrane. It catalyses the reaction a ubiquinone + n Na(+)(in) + NADH + H(+) = a ubiquinol + n Na(+)(out) + NAD(+). In terms of biological role, NQR complex catalyzes the reduction of ubiquinone-1 to ubiquinol by two successive reactions, coupled with the transport of Na(+) ions from the cytoplasm to the periplasm. NqrA to NqrE are probably involved in the second step, the conversion of ubisemiquinone to ubiquinol. In Chlamydia pneumoniae (Chlamydophila pneumoniae), this protein is Na(+)-translocating NADH-quinone reductase subunit D.